The chain runs to 608 residues: RAS guanyl-releasing protein 2 (608 aa).

One can recognise an N-terminal Ras-GEF domain in the interval 4–126; it reads TLDLDKGCTV…SLIDIESVPT (123 aa). A phosphoserine mark is found at serine 116, serine 117, and serine 147. The 234-residue stretch at 154–387 folds into the Ras-GEF domain; it reads EPMELAEHLT…YQLSLQREPR (234 aa). Residues 382–405 form a disordered region; the sequence is LQREPRSKSSPTSPTSCTPPPRPP. 2 consecutive EF-hand domains span residues 426–461 and 463–490; these read HIEK…FPYL and AFGD…SSSV. Residues aspartate 439, aspartate 441, aspartate 443, histidine 445, glutamate 450, aspartate 468, asparagine 470, aspartate 472, cysteine 474, and glutamate 479 each coordinate Ca(2+). The Phorbol-ester/DAG-type zinc finger occupies 498–548; the sequence is VHNFQESNSLRPVACRHCKALILGIYKQGLKCRACGVNCHKQCKERLSVEC. 2 positions are modified to phosphoserine: serine 554 and serine 575. The segment at 555–596 is disordered; sequence VSLEGSAPSPSPTHTHHRAFSFSLPRPGRRSSRPPEIREEEV.

The protein belongs to the RASGRP family. Forms a signaling complex with RAP1 and BRAF. Interacts with F-actin. Interacts with RAP1. In terms of tissue distribution, detected in megakaryocytes, platelet and neutrophils but not in lymphocytes (at protein level). Isoform 1 and isoform 3 are detected in brain basal glanglia, heart, lung, spleen, liver and kidney interstitial cells.

Its subcellular location is the cytoplasm. It localises to the cytosol. The protein localises to the cell membrane. It is found in the synapse. The protein resides in the synaptosome. Its subcellular location is the cell projection. It localises to the ruffle membrane. In terms of biological role, functions as a calcium- and DAG-regulated nucleotide exchange factor specifically activating Rap through the exchange of bound GDP for GTP. May also activate other GTPases such as RRAS, RRAS2, NRAS, KRAS but not HRAS. Functions in aggregation of platelets and adhesion of T-lymphocytes and neutrophils probably through inside-out integrin activation. May function in the muscarinic acetylcholine receptor M1/CHRM1 signaling pathway. This is RAS guanyl-releasing protein 2 (Rasgrp2) from Mus musculus (Mouse).